The sequence spans 217 residues: MSSKPSNMLDEVTLYTHYGLSVAKKLGANMVDAFRSAFSVNDDIRQVYYRDKGISHAKAGRYSEAVVMLEQVYDADAFDVEVALHLGIAYVKTGAVDRGTELLERSIADAPDNIKVATVLGLTYVQVQKYDLAVPLLVKVAEANPVNFNVRFRLGVALDNLGRFDEAIDSFKIALGLRPNEGKVHRAIAYSYEQMGSHEEALPHFKKANELDERSAV.

TPR repeat units lie at residues 12-44 (VTLYTHYGLSVAKKLGANMVDAFRSAFSVNDDI), 46-79 (QVYYRDKGISHAKAGRYSEAVVMLEQVYDADAFD), 80-113 (VEVALHLGIAYVKTGAVDRGTELLERSIADAPDN), 114-147 (IKVATVLGLTYVQVQKYDLAVPLLVKVAEANPVN), 148-181 (FNVRFRLGVALDNLGRFDEAIDSFKIALGLRPNE), and 182-215 (GKVHRAIAYSYEQMGSHEEALPHFKKANELDERS). An N-terminal domain region spans residues 41-112 (NDDIRQVYYR…LERSIADAPD (72 aa)). The C-terminal domain stretch occupies residues 113–217 (NIKVATVLGL…ANELDERSAV (105 aa)).

The protein belongs to the magnetosome MamA family. In terms of assembly, forms round, 20 nm diameter complexes with a central cavity. Probably binds MamC. Interacts with full-length Mms6.

It is found in the magnetosome membrane. Functionally, probably forms a large homooligomer on which other magnetosome subunits assemble. Required for formation of functional magnetosomes from pre-existing vesicles. This Magnetospirillum gryphiswaldense (strain DSM 6361 / JCM 21280 / NBRC 15271 / MSR-1) protein is Magnetosome protein MamA.